We begin with the raw amino-acid sequence, 688 residues long: Lipase (688 aa).

The first 35 residues, 1–35 (MKTRQNKYSIRKFSVGASSILIAALLFMGGGSAQA), serve as a signal peptide directing secretion. Residues 31–309 (GSAQAAEQQQ…KSAKQKQYKN (279 aa)) are disordered. Residues 36-302 (AEQQQDKGTV…KNEDQTNKSA (267 aa)) constitute a propeptide, removed in mature form. Over residues 45–54 (VENSTTQSIG) the composition is skewed to polar residues. Residues 68 to 79 (NKNVNEKSNVNS) show a composition bias toward low complexity. 3 stretches are compositionally biased toward basic and acidic residues: residues 84–95 (ESLHNETPKNED), 103–117 (SQNDNKSESVVEQNK), and 126–143 (HSEEKPQQEQVELEKHAS). Positions 144–172 (ENNQTLHSKAAQSNEDVKTKPSQLDNTAA) are enriched in polar residues. Residues 173-183 (KQEDSQKENLS) are compositionally biased toward basic and acidic residues. A compositionally biased stretch (polar residues) spans 184–211 (KQDTQSSKTTDLLRATAQNQSKDSQSTE). Basic and acidic residues predominate over residues 240–267 (SKEEPLKVDKQANPTTDKDKSSKNDKGS). A compositionally biased stretch (polar residues) spans 274 to 289 (LESNAVATTNKQSKQQ). S418 functions as the Nucleophile in the catalytic mechanism. The active-site Charge relay system is the D609. Residue D647 participates in Ca(2+) binding. The Charge relay system role is filled by H648. Ca(2+) contacts are provided by D650, D655, and D658.

Belongs to the AB hydrolase superfamily. Lipase family.

The protein localises to the secreted. The enzyme catalyses a triacylglycerol + H2O = a diacylglycerol + a fatty acid + H(+). This Staphylococcus epidermidis protein is Lipase (lip).